A 659-amino-acid polypeptide reads, in one-letter code: Alpha-galactosidase D (659 aa).

Residues 1 to 20 form the signal peptide; it reads MRALVPMVVAATALASPAPA. Residues Asn-48, Asn-86, and Asn-130 are each glycosylated (N-linked (GlcNAc...) asparagine). Cys-125 and Cys-158 are joined by a disulfide. Residue Asp-156 is the Nucleophile of the active site. Asn-183 carries N-linked (GlcNAc...) asparagine glycosylation. A substrate-binding site is contributed by 201–205; the sequence is EWGID. The Proton donor role is filled by Asp-223. 5 N-linked (GlcNAc...) asparagine glycosylation sites follow: Asn-438, Asn-450, Asn-484, Asn-551, and Asn-583.

Belongs to the glycosyl hydrolase 27 family.

Its subcellular location is the secreted. It catalyses the reaction Hydrolysis of terminal, non-reducing alpha-D-galactose residues in alpha-D-galactosides, including galactose oligosaccharides, galactomannans and galactolipids.. In terms of biological role, hydrolyzes a variety of simple alpha-D-galactoside as well as more complex molecules such as oligosaccharides and polysaccharides. Active on paranitrophenyl-alpha-galactoside but not on raffinose, locust bean gum and gum guar. The protein is Alpha-galactosidase D (aglD) of Emericella nidulans (strain FGSC A4 / ATCC 38163 / CBS 112.46 / NRRL 194 / M139) (Aspergillus nidulans).